The primary structure comprises 1353 residues: ABC-type transporter MYCGRDRAFT_41235 (1353 aa).

A helical transmembrane segment spans residues 40–60; sequence ASASLWNWFFFSWLNPLIAIG. Residue N121 is glycosylated (N-linked (GlcNAc...) asparagine). Transmembrane regions (helical) follow at residues 124–144, 172–192, 250–270, 271–291, 364–384, and 397–417; these read VLVW…ATIT, IGQG…GVMA, FACG…ICLG, LTIA…AILV, VALS…TYAA, and ALTL…AFGA. In terms of domain architecture, ABC transmembrane type-1 1 spans 129 to 420; that stretch reads WVGGAMKLFA…LPVAFGAAAD (292 aa). Residues 460-684 form the ABC transporter 1 domain; that stretch reads YRVQDHSDEK…EGGQMRRVVE (225 aa). An N-linked (GlcNAc...) asparagine glycan is attached at N481. 496 to 503 serves as a coordination point for ATP; the sequence is GPVGAGKS. The tract at residues 687–720 is disordered; it reads ASKSSAEEEEVEDGDLKDGVPSTDGGDASQTTSN. 6 helical membrane passes run 748 to 768, 796 to 816, 864 to 882, 888 to 907, 973 to 993, and 1002 to 1022; these read PAFT…GSIL, LGVS…FFIF, AFRM…VVLI, WFLL…GMYY, LSVR…LIVV, and AQGG…GFMI. Residues 756–1030 enclose the ABC transmembrane type-1 2 domain; that stretch reads ILSMLIFQGG…MIRQSAEIEN (275 aa). In terms of domain architecture, ABC transporter 2 spans 1070 to 1334; the sequence is IEMRDVVFTH…EGGHFRSLCS (265 aa). 1104–1111 is an ATP binding site; it reads GRTGSGKS. Polar residues predominate over residues 1191-1200; sequence QSSAETLTSS. Positions 1191–1223 are disordered; that stretch reads QSSAETLTSSDQEKSSPDDAAISPSSHSHSQHL. The span at 1208–1218 shows a compositional bias: low complexity; that stretch reads DDAAISPSSHS.

The protein belongs to the ABC transporter superfamily. ABCC family. Conjugate transporter (TC 3.A.1.208) subfamily.

It is found in the cell membrane. Its function is as follows. Multidrug resistance protein; part of the gene cluster 14 that mediates the biosynthesis of a ferrichrome A-like siderophors which may contribute to organismal virulence. The sequence is that of ABC-type transporter MYCGRDRAFT_41235 from Zymoseptoria tritici (strain CBS 115943 / IPO323) (Speckled leaf blotch fungus).